A 393-amino-acid chain; its full sequence is Lipid-A-disaccharide synthase (393 aa).

It belongs to the LpxB family.

The enzyme catalyses a lipid X + a UDP-2-N,3-O-bis[(3R)-3-hydroxyacyl]-alpha-D-glucosamine = a lipid A disaccharide + UDP + H(+). It participates in bacterial outer membrane biogenesis; LPS lipid A biosynthesis. Its function is as follows. Condensation of UDP-2,3-diacylglucosamine and 2,3-diacylglucosamine-1-phosphate to form lipid A disaccharide, a precursor of lipid A, a phosphorylated glycolipid that anchors the lipopolysaccharide to the outer membrane of the cell. The protein is Lipid-A-disaccharide synthase of Granulibacter bethesdensis (strain ATCC BAA-1260 / CGDNIH1).